The primary structure comprises 213 residues: Thymidylate kinase (213 aa).

10 to 17 (GLEGAGKT) serves as a coordination point for ATP.

Belongs to the thymidylate kinase family.

The catalysed reaction is dTMP + ATP = dTDP + ADP. Phosphorylation of dTMP to form dTDP in both de novo and salvage pathways of dTTP synthesis. This is Thymidylate kinase from Enterobacter sp. (strain 638).